The primary structure comprises 447 residues: GTPase Der (447 aa).

EngA-type G domains follow at residues 3–167 (PVIA…HLAD) and 180–353 (IRLA…ASAN). Residues 9-16 (GRPNVGKS), 56-60 (DTGGF), 119-122 (NKAE), 186-193 (GRPNVGKS), 233-237 (DTAGL), and 298-301 (NKWD) each bind GTP. One can recognise a KH-like domain in the interval 354–438 (RKMSTPVLTR…PMRIQMKSSH (85 aa)).

It belongs to the TRAFAC class TrmE-Era-EngA-EngB-Septin-like GTPase superfamily. EngA (Der) GTPase family. Associates with the 50S ribosomal subunit.

GTPase that plays an essential role in the late steps of ribosome biogenesis. The sequence is that of GTPase Der from Polaromonas sp. (strain JS666 / ATCC BAA-500).